The primary structure comprises 401 residues: E3 ubiquitin-protein ligase DA2 (401 aa).

The RING-type; degenerate zinc-finger motif lies at 59-102; it reads CPICFLYYPSLNRSRCCMKSICTECFLQMKNPNSARPTQCPFCK. Basic and acidic residues predominate over residues 139 to 153; the sequence is KEMQDDEEKMQKRLE. The segment at 139-164 is disordered; sequence KEMQDDEEKMQKRLESCSSSTSAMTG.

As to quaternary structure, interacts with DA1 (via C-terminus).

It catalyses the reaction S-ubiquitinyl-[E2 ubiquitin-conjugating enzyme]-L-cysteine + [acceptor protein]-L-lysine = [E2 ubiquitin-conjugating enzyme]-L-cysteine + N(6)-ubiquitinyl-[acceptor protein]-L-lysine.. It functions in the pathway protein modification; protein ubiquitination. E3 ubiquitin-protein ligase involved in the regulation of organ and seed size. Acts synergistically with DA1 to regulate seed size. Functions synergistically with DA1 to restrict cell proliferation in the maternal integuments of ovules and developing seeds. Seems to function independently of BB. Possesses E3 ubiquitin-protein ligase activity in vitro. Polyubiquitinates DA1, DAR1 and DAR2, but not DAR3. The chain is E3 ubiquitin-protein ligase DA2 from Arabidopsis thaliana (Mouse-ear cress).